A 472-amino-acid polypeptide reads, in one-letter code: Coenzyme F(430) synthetase (472 aa).

119–125 (GVKAKTS) serves as a coordination point for ATP.

This sequence belongs to the MurCDEF family.

The enzyme catalyses 15,17(3)-seco-F430-17(3)-acid + ATP = coenzyme F430 + ADP + phosphate. In terms of biological role, involved in the biosynthesis of the unique nickel-containing tetrapyrrole coenzyme F430, the prosthetic group of methyl-coenzyme M reductase (MCR), which plays a key role in methanogenesis and anaerobic methane oxidation. Catalyzes the activation the g-propionate side chain of 15,17(3)-seco-F430-17(3)-acid (seco-F430) for intramolecular C-C bond formation to yield the carbocyclic F ring of coenzyme F430. The protein is Coenzyme F(430) synthetase of Methanosarcina acetivorans (strain ATCC 35395 / DSM 2834 / JCM 12185 / C2A).